The following is a 734-amino-acid chain: Photosystem I P700 chlorophyll a apoprotein A2 (734 aa).

The next 8 helical transmembrane spans lie at 46-69, 135-158, 175-199, 273-291, 330-353, 369-395, 417-439, and 517-535; these read IFASHFGQLAIIFLWTSGNLFHVA, LYTGALFLLFLSAISLIAGWLHLQ, LNHHLSGLFGVSSLAWTGHLVHVAI, MAHHHLAIAFIFLVAGHMY, LHFQLGLALASLGVITSLVAQHMY, AALYTHHQYIAGFIMTGAFAHGAIFFI, AIISHLSWASLFLGFHTLGLYVH, and FLVHHAIALGLHTTTLILV. Residues C559 and C568 each contribute to the [4Fe-4S] cluster site. 2 consecutive transmembrane segments (helical) span residues 575–596 and 643–665; these read AFYLAVFWMLNTIGWVTFYWHW and LSVWAWMFLFGHLVWATGFMFLI. H654, M662, and Y670 together coordinate chlorophyll a. A phylloquinone-binding site is contributed by W671. Residues 707-727 form a helical membrane-spanning segment; that stretch reads LVGLAHFSVGYIFTYAAFLIA.

Belongs to the PsaA/PsaB family. The PsaA/B heterodimer binds the P700 chlorophyll special pair and subsequent electron acceptors. PSI consists of a core antenna complex that captures photons, and an electron transfer chain that converts photonic excitation into a charge separation. The eukaryotic PSI reaction center is composed of at least 11 subunits. P700 is a chlorophyll a/chlorophyll a' dimer, A0 is one or more chlorophyll a, A1 is one or both phylloquinones and FX is a shared 4Fe-4S iron-sulfur center. serves as cofactor.

It is found in the plastid. The protein resides in the chloroplast thylakoid membrane. It catalyses the reaction reduced [plastocyanin] + hnu + oxidized [2Fe-2S]-[ferredoxin] = oxidized [plastocyanin] + reduced [2Fe-2S]-[ferredoxin]. In terms of biological role, psaA and PsaB bind P700, the primary electron donor of photosystem I (PSI), as well as the electron acceptors A0, A1 and FX. PSI is a plastocyanin-ferredoxin oxidoreductase, converting photonic excitation into a charge separation, which transfers an electron from the donor P700 chlorophyll pair to the spectroscopically characterized acceptors A0, A1, FX, FA and FB in turn. Oxidized P700 is reduced on the lumenal side of the thylakoid membrane by plastocyanin. The chain is Photosystem I P700 chlorophyll a apoprotein A2 from Daucus carota (Wild carrot).